Consider the following 124-residue polypeptide: Large ribosomal subunit protein bL12 (124 aa).

The protein belongs to the bacterial ribosomal protein bL12 family. In terms of assembly, homodimer. Part of the ribosomal stalk of the 50S ribosomal subunit. Forms a multimeric L10(L12)X complex, where L10 forms an elongated spine to which 2 to 4 L12 dimers bind in a sequential fashion. Binds GTP-bound translation factors.

Its function is as follows. Forms part of the ribosomal stalk which helps the ribosome interact with GTP-bound translation factors. Is thus essential for accurate translation. The sequence is that of Large ribosomal subunit protein bL12 from Brucella abortus (strain S19).